The sequence spans 229 residues: Urease accessory protein UreG (229 aa).

A compositionally biased stretch (basic and acidic residues) spans 1–15; sequence MPPHFIDGEPHDHQH. The tract at residues 1 to 20 is disordered; sequence MPPHFIDGEPHDHQHDRPRR. 34–41 serves as a coordination point for GTP; sequence GPVGSGKT.

It belongs to the SIMIBI class G3E GTPase family. UreG subfamily. In terms of assembly, homodimer. UreD, UreF and UreG form a complex that acts as a GTP-hydrolysis-dependent molecular chaperone, activating the urease apoprotein by helping to assemble the nickel containing metallocenter of UreC. The UreE protein probably delivers the nickel.

Its subcellular location is the cytoplasm. Its function is as follows. Facilitates the functional incorporation of the urease nickel metallocenter. This process requires GTP hydrolysis, probably effectuated by UreG. The chain is Urease accessory protein UreG from Rhodococcus jostii (strain RHA1).